Consider the following 595-residue polypeptide: Probable inactive glycosyltransferase 25 family member 3 (595 aa).

A signal peptide spans 1 to 24 (MRAAPAAPLLQLLLLLGPRPEAAG). N-linked (GlcNAc...) asparagine glycosylation is found at N75, N153, N237, and N360. The tract at residues 576–595 (RLDLAGGSGHSLRPHPRDEL) is disordered. The Prevents secretion from ER signature appears at 592–595 (RDEL).

This sequence belongs to the glycosyltransferase 25 family.

It is found in the endoplasmic reticulum lumen. Probable cell adhesion protein involved in leukocyte transmigration across the blood-brain barrier. Does not express any beta-galactosyltransferase activity in vitro. The polypeptide is Probable inactive glycosyltransferase 25 family member 3 (CERCAM) (Bos taurus (Bovine)).